The sequence spans 723 residues: LIM domain-binding protein 3 (723 aa).

One can recognise a PDZ domain in the interval 1–84 (MSYSVTLTGP…NLSLTLQKSK (84 aa)). A phosphoserine mark is found at Ser-44, Ser-98, and Asp-112. 2 disordered regions span residues 89-134 (ISTT…GALE) and 164-193 (SPVAKASSEGAQGSVSPKVLPGPSQPRQYN). A Phosphothreonine modification is found at Thr-119. Residues Ser-121 and Ser-123 each carry the phosphoserine modification. Ser-214 bears the Phosphoserine mark. The residue at position 216 (Arg-216) is an Omega-N-methylarginine. Residues Ser-220, Ser-251, and Asp-288 each carry the phosphoserine modification. 2 disordered regions span residues 280 to 423 (GTEY…YSPT) and 436 to 525 (SPAP…PQVT). An Omega-N-methylarginine modification is found at Ala-291. Residues 309 to 376 (ATSPLLPASA…AAAASPAPSA (68 aa)) show a composition bias toward low complexity. Position 327 is a phosphoserine (Ile-327). Ser-330 is subject to Omega-N-methylarginine. Over residues 436-466 (SPAPTYTPSPAPTYSPSPAPAYTPSPAPNYT) the composition is skewed to pro residues. Positions 490 to 509 (DSFSQKFAPGKSTTTVSKQT) are enriched in polar residues. 2 positions are modified to omega-N-methylarginine: Arg-512 and Arg-529. LIM zinc-binding domains are found at residues 545–603 (PLCG…QFFA), 604–663 (PICA…LFST), and 664–723 (KCHG…AINV).

Interacts via its LIM domains with various PKC isoforms. Interacts via its PDZ domain with the ACTN2 C-terminal region. Interacts with MYOZ1, MYOZ2 and MYOZ3. Expressed primarily in adult heart and skeletal muscle, and detected at lower levels in lung. Isoforms are expressed in a tissue-specific manner. Isoform 1, isoform 3 and isoform 5 are expressed in heart, whereas isoform 2, isoform 4 and isoform 6 are expressed in skeletal muscle.

It is found in the cytoplasm. It localises to the perinuclear region. The protein localises to the cell projection. The protein resides in the pseudopodium. Its subcellular location is the cytoskeleton. It is found in the myofibril. It localises to the sarcomere. The protein localises to the z line. Its function is as follows. May function as an adapter in striated muscle to couple protein kinase C-mediated signaling via its LIM domains to the cytoskeleton. The sequence is that of LIM domain-binding protein 3 from Mus musculus (Mouse).